Here is a 275-residue protein sequence, read N- to C-terminus: Large ribosomal subunit protein uL2 (275 aa).

Disordered stretches follow at residues 1-55 (MGIR…RHRG) and 218-275 (PHVR…RRRR). Residues 259-275 (TRNKKKASSRLIVRRRR) show a composition bias toward basic residues.

This sequence belongs to the universal ribosomal protein uL2 family. In terms of assembly, part of the 50S ribosomal subunit. Forms a bridge to the 30S subunit in the 70S ribosome.

Its function is as follows. One of the primary rRNA binding proteins. Required for association of the 30S and 50S subunits to form the 70S ribosome, for tRNA binding and peptide bond formation. It has been suggested to have peptidyltransferase activity; this is somewhat controversial. Makes several contacts with the 16S rRNA in the 70S ribosome. This Crocosphaera subtropica (strain ATCC 51142 / BH68) (Cyanothece sp. (strain ATCC 51142)) protein is Large ribosomal subunit protein uL2.